The sequence spans 200 residues: Probable nicotinate-nucleotide adenylyltransferase (200 aa).

Belongs to the NadD family.

The enzyme catalyses nicotinate beta-D-ribonucleotide + ATP + H(+) = deamido-NAD(+) + diphosphate. Its pathway is cofactor biosynthesis; NAD(+) biosynthesis; deamido-NAD(+) from nicotinate D-ribonucleotide: step 1/1. In terms of biological role, catalyzes the reversible adenylation of nicotinate mononucleotide (NaMN) to nicotinic acid adenine dinucleotide (NaAD). This is Probable nicotinate-nucleotide adenylyltransferase from Lachnoclostridium phytofermentans (strain ATCC 700394 / DSM 18823 / ISDg) (Clostridium phytofermentans).